Reading from the N-terminus, the 205-residue chain is Probable GTP-binding protein EngB (205 aa).

In terms of domain architecture, EngB-type G spans 8-195; it reads RDAEVVLIGR…NEAVRHHLHE (188 aa). GTP-binding positions include 16-23, 41-45, 60-63, 140-143, and 175-177; these read GRSNVGKS, GVTRS, DLPG, NKMD, and ISA. The Mg(2+) site is built by S23 and T43.

The protein belongs to the TRAFAC class TrmE-Era-EngA-EngB-Septin-like GTPase superfamily. EngB GTPase family. Requires Mg(2+) as cofactor.

Functionally, necessary for normal cell division and for the maintenance of normal septation. The protein is Probable GTP-binding protein EngB of Haloarcula marismortui (strain ATCC 43049 / DSM 3752 / JCM 8966 / VKM B-1809) (Halobacterium marismortui).